The following is a 304-amino-acid chain: ATP synthase gamma chain (304 aa).

Belongs to the ATPase gamma chain family. In terms of assembly, F-type ATPases have 2 components, CF(1) - the catalytic core - and CF(0) - the membrane proton channel. CF(1) has five subunits: alpha(3), beta(3), gamma(1), delta(1), epsilon(1). CF(0) has three main subunits: a, b and c.

Its subcellular location is the cell membrane. In terms of biological role, produces ATP from ADP in the presence of a proton gradient across the membrane. The gamma chain is believed to be important in regulating ATPase activity and the flow of protons through the CF(0) complex. This Mycobacterium marinum (strain ATCC BAA-535 / M) protein is ATP synthase gamma chain.